Here is a 306-residue protein sequence, read N- to C-terminus: Agmatinase (306 aa).

Mn(2+) contacts are provided by H126, D149, H151, D153, D230, and D232.

This sequence belongs to the arginase family. Agmatinase subfamily. It depends on Mn(2+) as a cofactor.

It carries out the reaction agmatine + H2O = urea + putrescine. It participates in amine and polyamine biosynthesis; putrescine biosynthesis via agmatine pathway; putrescine from agmatine: step 1/1. Functionally, catalyzes the formation of putrescine from agmatine. The polypeptide is Agmatinase (Enterobacter sp. (strain 638)).